Here is a 763-residue protein sequence, read N- to C-terminus: Serine/threonine-protein kinase PknG (763 aa).

Residues Met1–Gln32 form a disordered region. The Protein kinase domain maps to Tyr160 to Met406. ATP-binding positions include Ile166 to Val174 and Lys190. Asp289 functions as the Proton acceptor in the catalytic mechanism.

This sequence belongs to the protein kinase superfamily. Ser/Thr protein kinase family. Post-translationally, autophosphorylated.

The enzyme catalyses L-seryl-[protein] + ATP = O-phospho-L-seryl-[protein] + ADP + H(+). It catalyses the reaction L-threonyl-[protein] + ATP = O-phospho-L-threonyl-[protein] + ADP + H(+). The sequence is that of Serine/threonine-protein kinase PknG (pknG) from Mycobacterium leprae (strain TN).